The primary structure comprises 776 residues: Peregrinol diphosphate synthase CPS1, chloroplastic (776 aa).

A chloroplast-targeting transit peptide spans 1–17 (MASTPTLNLSITTPFVR). Residue Lys-238 coordinates substrate. Residues Asp-371 and Asp-373 each contribute to the Mg(2+) site. Residues 371–374 (DIDD) carry the DXDD motif motif. Lys-457 provides a ligand contact to substrate.

Belongs to the terpene synthase family. Requires Mg(2+) as cofactor. In terms of tissue distribution, present in both leaves and flowers, with higher levels in leaves.

The protein localises to the plastid. It localises to the chloroplast. It catalyses the reaction peregrinol diphosphate = (2E,6E,10E)-geranylgeranyl diphosphate + H2O. It participates in secondary metabolite biosynthesis; terpenoid biosynthesis. Functionally, involved in the biosynthesis of labdane-type diterpenoid including marrubiin and other labdane-related furanoid diterpenoids with potential applications as anti-diabetics, analgesics or vasorelaxants. Terpene synthase that produces peregrinol diphosphate from geranylgeranyl diphosphate (GGPP). The chain is Peregrinol diphosphate synthase CPS1, chloroplastic from Marrubium vulgare (White horehound).